An 86-amino-acid chain; its full sequence is Neurotoxin-like protein pMD18-NTL3 (86 aa).

An N-terminal signal peptide occupies residues 1–21 (MKTLLLTLVVLTIACLDLGYT). Intrachain disulfides connect C24–C45, C38–C62, C66–C78, and C79–C84.

This sequence belongs to the three-finger toxin family. Short-chain subfamily. Orphan group IX sub-subfamily. Expressed by the venom gland.

Its subcellular location is the secreted. In Bungarus multicinctus (Many-banded krait), this protein is Neurotoxin-like protein pMD18-NTL3.